A 622-amino-acid chain; its full sequence is 1-deoxy-D-xylulose-5-phosphate synthase (622 aa).

Thiamine diphosphate contacts are provided by residues His80 and 121-123 (GHS). Asp152 contacts Mg(2+). Thiamine diphosphate is bound by residues 153–154 (GA), Asn181, Tyr288, and Glu370. A Mg(2+)-binding site is contributed by Asn181.

The protein belongs to the transketolase family. DXPS subfamily. In terms of assembly, homodimer. It depends on Mg(2+) as a cofactor. The cofactor is thiamine diphosphate.

The enzyme catalyses D-glyceraldehyde 3-phosphate + pyruvate + H(+) = 1-deoxy-D-xylulose 5-phosphate + CO2. It participates in metabolic intermediate biosynthesis; 1-deoxy-D-xylulose 5-phosphate biosynthesis; 1-deoxy-D-xylulose 5-phosphate from D-glyceraldehyde 3-phosphate and pyruvate: step 1/1. Functionally, catalyzes the acyloin condensation reaction between C atoms 2 and 3 of pyruvate and glyceraldehyde 3-phosphate to yield 1-deoxy-D-xylulose-5-phosphate (DXP). In Shewanella loihica (strain ATCC BAA-1088 / PV-4), this protein is 1-deoxy-D-xylulose-5-phosphate synthase.